The chain runs to 538 residues: Putative outer membrane porin BglH (538 aa).

A signal peptide spans 1 to 25; that stretch reads MFRRNIITSAILLMAPLAFSAQSLA.

It belongs to the porin LamB (TC 1.B.3) family.

The protein localises to the cell outer membrane. Its function is as follows. May be a sugar porin with a broad carbohydrate specificity. In Escherichia coli O6:K15:H31 (strain 536 / UPEC), this protein is Putative outer membrane porin BglH (bglH).